Consider the following 288-residue polypeptide: ATP synthase gamma chain (288 aa).

The protein belongs to the ATPase gamma chain family. In terms of assembly, F-type ATPases have 2 components, CF(1) - the catalytic core - and CF(0) - the membrane proton channel. CF(1) has five subunits: alpha(3), beta(3), gamma(1), delta(1), epsilon(1). CF(0) has three main subunits: a, b and c.

It localises to the cell inner membrane. In terms of biological role, produces ATP from ADP in the presence of a proton gradient across the membrane. The gamma chain is believed to be important in regulating ATPase activity and the flow of protons through the CF(0) complex. This Paracidovorax citrulli (strain AAC00-1) (Acidovorax citrulli) protein is ATP synthase gamma chain.